Reading from the N-terminus, the 243-residue chain is Ubiquinone/menaquinone biosynthesis C-methyltransferase UbiE (243 aa).

S-adenosyl-L-methionine is bound by residues Thr-69, Asp-90, and 116 to 117 (DA).

Belongs to the class I-like SAM-binding methyltransferase superfamily. MenG/UbiE family.

It catalyses the reaction a 2-demethylmenaquinol + S-adenosyl-L-methionine = a menaquinol + S-adenosyl-L-homocysteine + H(+). The enzyme catalyses a 2-methoxy-6-(all-trans-polyprenyl)benzene-1,4-diol + S-adenosyl-L-methionine = a 5-methoxy-2-methyl-3-(all-trans-polyprenyl)benzene-1,4-diol + S-adenosyl-L-homocysteine + H(+). Its pathway is quinol/quinone metabolism; menaquinone biosynthesis; menaquinol from 1,4-dihydroxy-2-naphthoate: step 2/2. It participates in cofactor biosynthesis; ubiquinone biosynthesis. Its function is as follows. Methyltransferase required for the conversion of demethylmenaquinol (DMKH2) to menaquinol (MKH2) and the conversion of 2-polyprenyl-6-methoxy-1,4-benzoquinol (DDMQH2) to 2-polyprenyl-3-methyl-6-methoxy-1,4-benzoquinol (DMQH2). The chain is Ubiquinone/menaquinone biosynthesis C-methyltransferase UbiE from Ralstonia nicotianae (strain ATCC BAA-1114 / GMI1000) (Ralstonia solanacearum).